The following is a 483-amino-acid chain: Regulatory protein ViaA (483 aa).

It belongs to the ViaA family. As to quaternary structure, homodimer. Interacts with RavA.

Its subcellular location is the cytoplasm. In terms of biological role, component of the RavA-ViaA chaperone complex, which may act on the membrane to optimize the function of some of the respiratory chains. ViaA stimulates the ATPase activity of RavA. This Shigella sonnei (strain Ss046) protein is Regulatory protein ViaA.